Consider the following 649-residue polypeptide: Protein translocase subunit SecA 2 (649 aa).

ATP is bound by residues glutamine 105, 123–127 (GEGKT), and aspartate 535.

This sequence belongs to the SecA family. As to quaternary structure, monomer and homodimer. Part of the essential Sec protein translocation apparatus which comprises SecA, SecYEG and auxiliary proteins SecDF-YajC and YidC.

It localises to the cell inner membrane. Its subcellular location is the cytoplasm. It catalyses the reaction ATP + H2O + cellular proteinSide 1 = ADP + phosphate + cellular proteinSide 2.. Functionally, part of the Sec protein translocase complex. Interacts with the SecYEG preprotein conducting channel. Has a central role in coupling the hydrolysis of ATP to the transfer of proteins into and across the cell membrane, serving both as a receptor for the preprotein-SecB complex and as an ATP-driven molecular motor driving the stepwise translocation of polypeptide chains across the membrane. The protein is Protein translocase subunit SecA 2 of Magnetococcus marinus (strain ATCC BAA-1437 / JCM 17883 / MC-1).